The sequence spans 96 residues: MAVEVKYVVIREGEEKMSFTSKKEADAYDKMLDTADLLDTWLTNSPVQMEDEQREALSLWLAEQKDVLSTILKTGKLPSPQVVGAESEEEDASHAA.

This is an uncharacterized protein from Escherichia coli O157:H7.